Here is a 489-residue protein sequence, read N- to C-terminus: MEPELEHTLPGTLTWSHSGGPESQEMDFLEQGENSWPSPAVATSSERTCAIRGVKASRWTRQEAVEEAEPPGLGEGAQSRPAAESTRQEATFPKATPLAQAVPLAEAETSPTGWDLLLPDCAASAGGSSTGDLELTIEFPAPEAWDCELEGLGKDRPRPGPSPQAPLLGLSWDDELQKPGAQVYMHFMQEHTCYDAMATSSKLVIFDTTLEIKKAFFAMVANGVRAAPLWDSKKQSFVGMLTITDFILVLHRYYRSPLVQIYEIEEHKIETWREIYLQGCFKPLVSISPNDSLFEAVYALIKNRIHRLPVLDPVSGTVLYILTHKRLLKFLHIFGALLPRPSFLCRTIQDLGIGTFRDLAVVLETAPVLTALDIFVDRRVSALPVVNESGQVVGLYSRFDVIHLAAQQTYNHLDMSVGEALRQRTLCLEGVLSCQPHESLGEVIDRIAREQVHRLVLVDETQHLLGVVSLSDILQALVLSPAGIDALSA.

Positions 1-95 (MEPELEHTLP…TRQEATFPKA (95 aa)) are disordered. Polar residues predominate over residues 32-47 (GENSWPSPAVATSSER). 3 CBS domains span residues 197 to 258 (MATS…RSPL), 280 to 340 (CFKP…LLPR), and 355 to 415 (TFRD…HLDM). ADP contacts are provided by residues Arg-225, 240–245 (MLTITD), Val-285, 306–307 (HR), and Lys-325. AMP-binding positions include Arg-225, 240 to 245 (MLTITD), Val-285, His-306, 306 to 307 (HR), Lys-325, Thr-355, Ala-360, 381 to 382 (SA), 397 to 400 (SRFD), Arg-424, Leu-432, His-453, 453 to 454 (HR), and 469 to 472 (SLSD). ATP contacts are provided by residues Arg-225, 240–245 (MLTITD), Val-285, 306–307 (HR), Arg-307, and Lys-325. The AMPK pseudosubstrate signature appears at 293–314 (LFEAVYALIKNRIHRLPVLDPV). ADP contacts are provided by residues 397–400 (SRFD), Arg-424, Leu-432, and 453–454 (HR). ATP is bound by residues 397-400 (SRFD), Arg-424, Leu-432, and 453-454 (HR). The CBS 4 domain maps to 427–486 (CLEGVLSCQPHESLGEVIDRIAREQVHRLVLVDETQHLLGVVSLSDILQALVLSPAGIDA).

The protein belongs to the 5'-AMP-activated protein kinase gamma subunit family. In terms of assembly, AMPK is a heterotrimer of an alpha catalytic subunit (PRKAA1 or PRKAA2), a beta (PRKAB1 or PRKAB2) and a gamma non-catalytic subunits (PRKAG1, PRKAG2 or PRKAG3). Interacts with FNIP1 and FNIP2. Post-translationally, phosphorylated by ULK1; leading to negatively regulate AMPK activity and suggesting the existence of a regulatory feedback loop between ULK1 and AMPK. In terms of processing, glycosylated; O-GlcNAcylated by OGT, promoting the AMP-activated protein kinase (AMPK) activity.

Functionally, AMP/ATP-binding subunit of AMP-activated protein kinase (AMPK), an energy sensor protein kinase that plays a key role in regulating cellular energy metabolism. In response to reduction of intracellular ATP levels, AMPK activates energy-producing pathways and inhibits energy-consuming processes: inhibits protein, carbohydrate and lipid biosynthesis, as well as cell growth and proliferation. AMPK acts via direct phosphorylation of metabolic enzymes, and by longer-term effects via phosphorylation of transcription regulators. AMPK also acts as a regulator of cellular polarity by remodeling the actin cytoskeleton; probably by indirectly activating myosin. The AMPK gamma3 subunit is a non-catalytic subunit with a regulatory role in muscle energy metabolism. It mediates binding to AMP, ADP and ATP, leading to AMPK activation or inhibition: AMP-binding results in allosteric activation of alpha catalytic subunit (PRKAA1 or PRKAA2) both by inducing phosphorylation and preventing dephosphorylation of catalytic subunits. ADP also stimulates phosphorylation, without stimulating already phosphorylated catalytic subunit. ATP promotes dephosphorylation of catalytic subunit, rendering the AMPK enzyme inactive. The sequence is that of 5'-AMP-activated protein kinase subunit gamma-3 (Prkag3) from Mus musculus (Mouse).